A 281-amino-acid polypeptide reads, in one-letter code: Bis(5'-nucleosyl)-tetraphosphatase, symmetrical (281 aa).

This sequence belongs to the Ap4A hydrolase family.

The catalysed reaction is P(1),P(4)-bis(5'-adenosyl) tetraphosphate + H2O = 2 ADP + 2 H(+). Hydrolyzes diadenosine 5',5'''-P1,P4-tetraphosphate to yield ADP. The polypeptide is Bis(5'-nucleosyl)-tetraphosphatase, symmetrical (Acidovorax ebreus (strain TPSY) (Diaphorobacter sp. (strain TPSY))).